The sequence spans 64 residues: Large ribosomal subunit protein bL35 (64 aa).

The disordered stretch occupies residues T17–T41. Residues E25–H35 are compositionally biased toward basic and acidic residues.

Belongs to the bacterial ribosomal protein bL35 family.

The chain is Large ribosomal subunit protein bL35 from Chlorobaculum parvum (strain DSM 263 / NCIMB 8327) (Chlorobium vibrioforme subsp. thiosulfatophilum).